A 338-amino-acid chain; its full sequence is Glutamyl-tRNA reductase (338 aa).

Substrate is bound by residues 50–53 (TCHR), serine 102, 107–109 (ETE), and glutamine 113. Cysteine 51 (nucleophile) is an active-site residue. Position 181-186 (181-186 (GYSEIN)) interacts with NADP(+).

This sequence belongs to the glutamyl-tRNA reductase family. As to quaternary structure, homodimer.

It carries out the reaction (S)-4-amino-5-oxopentanoate + tRNA(Glu) + NADP(+) = L-glutamyl-tRNA(Glu) + NADPH + H(+). It functions in the pathway porphyrin-containing compound metabolism; protoporphyrin-IX biosynthesis; 5-aminolevulinate from L-glutamyl-tRNA(Glu): step 1/2. Functionally, catalyzes the NADPH-dependent reduction of glutamyl-tRNA(Glu) to glutamate 1-semialdehyde (GSA). This Chlamydia abortus (strain DSM 27085 / S26/3) (Chlamydophila abortus) protein is Glutamyl-tRNA reductase.